Consider the following 604-residue polypeptide: MHFPKKKHSGNLSVVELPKEALQDSLTAAQITFKRYAHPNGNAGSAERPRHLKVESAPVVKSEPSLPRMRQPEPRSINHQYSRETLPGHSEAFSVPTTPLQTIHYDVRNKASNSPSSIAAAEAAAYLAHTNSFSNRSSGVGSRDPVMDTETKPPRAPSALKNELQLNRMRIPPPSYDNNVRSRSISPQVSYSTSLSSSCSISSDGEETSYREKSTDEAFPPEPSMSSYSLASKASAKASLTDPSQRQQESDYTAMNKLNGGNIIYKGTLPDLIPRSQRKTSKPRFKHKLLRSPEQQQENLSRVYSDQTQNGRAIINTQQNVKLKTTMRRGKYAITDNDETFPYDRKSVSSDSDTDEDSNVMEIKDKKKKSRRSKIKKGLKTTAAVVGSSTSVLPFPHHHHHHHQLHNPNSHHLHTHHHTSSHKFNEDKPWKSHRDLGFITEQERKRYESMWVSNRYSYLRLLPWWPSLANEDDESHLQPLNLPQDGLMLNLVVKDIWYRSNLPRDLLVQIYNMVDTRKDGTLDRKSFIVGMWLVDQCLYGRKLTNELDQRVWNSVDGYVLGTINVKPATSDHYHNANNPLDKPSKLSVRQELKNIKRDLRNVRI.

Disordered regions lie at residues 38–77 (HPNGNAGSAERPRHLKVESAPVVKSEPSLPRMRQPEPRSI), 133–249 (FSNR…RQQE), 267–300 (GTLPDLIPRSQRKTSKPRFKHKLLRSPEQQQENL), 338–380 (DETF…KGLK), and 394–428 (PFPHHHHHHHQLHNPNSHHLHTHHHTSSHKFNEDK). Positions 176 to 185 (YDNNVRSRSI) are enriched in polar residues. 2 stretches are compositionally biased toward low complexity: residues 186–203 (SPQVSYSTSLSSSCSISS) and 224–240 (SMSSYSLASKASAKASL). 3 stretches are compositionally biased toward basic residues: residues 276–290 (SQRKTSKPRFKHKLL), 366–379 (KKKKSRRSKIKKGL), and 396–421 (PHHHHHHHQLHNPNSHHLHTHHHTSS). An EH domain is found at 469-559 (ANEDDESHLQ…RVWNSVDGYV (91 aa)).

The protein belongs to the IRS4 family. As to quaternary structure, interacts with INP51.

With IRS4, acts as a positive regulator of INP51 activity and phosphatidylinositol 4,5-bisphosphate turnover. Negatively regulates signaling through the cell integrity pathway, including the MAP kinase SLT2. The chain is Protein TAX4 (TAX4) from Saccharomyces cerevisiae (strain YJM789) (Baker's yeast).